We begin with the raw amino-acid sequence, 115 residues long: Large ribosomal subunit protein bL19 (115 aa).

The protein belongs to the bacterial ribosomal protein bL19 family.

Its function is as follows. This protein is located at the 30S-50S ribosomal subunit interface and may play a role in the structure and function of the aminoacyl-tRNA binding site. This is Large ribosomal subunit protein bL19 from Streptococcus pneumoniae serotype 2 (strain D39 / NCTC 7466).